Reading from the N-terminus, the 445-residue chain is Transcriptional enhancer factor TEF-4 (445 aa).

Disordered stretches follow at residues 1 to 47 (MGDP…VWSP) and 191 to 217 (PPAS…SPPA). Positions 25–37 (EGTGGSEGVGGDG) are enriched in gly residues. A DNA-binding region (TEA) is located at residues 38 to 114 (SPDAEGVWSP…QVLARRKSRE (77 aa)). The segment at 172–445 (WNVPDVKPFS…QYHIYRLVRD (274 aa)) is transcriptional activation. Over residues 199 to 216 (YEPPPALSPLPPPAPSPP) the composition is skewed to pro residues.

In terms of assembly, interacts with YAP1 and WWTR1/TAZ. As to expression, highest expression in brain. High levels also found in lung, testis and ovarian follicle cells. Lower levels in heart and spleen.

The protein localises to the nucleus. In terms of biological role, transcription factor which plays a key role in the Hippo signaling pathway, a pathway involved in organ size control and tumor suppression by restricting proliferation and promoting apoptosis. The core of this pathway is composed of a kinase cascade wherein MST1/MST2, in complex with its regulatory protein SAV1, phosphorylates and activates LATS1/2 in complex with its regulatory protein MOB1, which in turn phosphorylates and inactivates YAP1 oncoprotein and WWTR1/TAZ. Acts by mediating gene expression of YAP1 and WWTR1/TAZ, thereby regulating cell proliferation, migration and epithelial mesenchymal transition (EMT) induction. Binds to the SPH and GT-IIC 'enhansons' (5'-GTGGAATGT-3'). May be involved in the gene regulation of neural development. Binds to the M-CAT motif. This Mus musculus (Mouse) protein is Transcriptional enhancer factor TEF-4 (Tead2).